The following is a 241-amino-acid chain: Ribosomal RNA small subunit methyltransferase G (241 aa).

Residues Gly79, Phe84, 130-131 (AE), and Arg150 contribute to the S-adenosyl-L-methionine site.

This sequence belongs to the methyltransferase superfamily. RNA methyltransferase RsmG family.

It is found in the cytoplasm. Specifically methylates the N7 position of a guanine in 16S rRNA. The protein is Ribosomal RNA small subunit methyltransferase G of Limosilactobacillus reuteri (strain DSM 20016) (Lactobacillus reuteri).